A 531-amino-acid chain; its full sequence is RCC1 and BTB domain-containing protein 1 (531 aa).

RCC1 repeat units follow at residues asparagine 40–threonine 91, aspartate 93–alanine 145, glycine 147–aspartate 198, serine 199–aspartate 250, glycine 252–threonine 302, and glycine 304–valine 356. BTB domains are found at residues alanine 370–proline 437 and glutamate 470–leucine 499.

As to expression, in the retina, mainly expressed in the inner retina with strong signals reaching up to the outer plexiform layer (at protein level).

It localises to the nucleus. Its function is as follows. May be involved in cell cycle regulation by chromatin remodeling. The chain is RCC1 and BTB domain-containing protein 1 (Rcbtb1) from Mus musculus (Mouse).